The following is a 245-amino-acid chain: Probable phosphatase YcdX (245 aa).

Zn(2+) is bound by residues His7, His9, His15, His40, Glu73, His101, His131, Asp192, and His194.

The protein belongs to the PHP family. Homotrimer. The cofactor is Zn(2+).

This is Probable phosphatase YcdX from Escherichia fergusonii (strain ATCC 35469 / DSM 13698 / CCUG 18766 / IAM 14443 / JCM 21226 / LMG 7866 / NBRC 102419 / NCTC 12128 / CDC 0568-73).